A 1052-amino-acid chain; its full sequence is Eukaryotic translation initiation factor 3 subunit A (1052 aa).

The PCI domain maps to 325 to 505; it reads IQYAASAVLL…GSLHFNNNIF (181 aa). Coiled coils occupy residues 568 to 712 and 769 to 882; these read REHV…RLRE and EKTA…SAQT. Basic and acidic residues-rich tracts occupy residues 570-600 and 793-874; these read HVSN…EQMQ and KIRL…EQEK. Disordered regions lie at residues 570-606 and 793-1052; these read HVSN…HQNQ and KIRL…DDKN. 2 stretches are compositionally biased toward polar residues: residues 875 to 887 and 895 to 906; these read LSNL…QPTW and APTTAAPSSMRV. 4 stretches are compositionally biased toward basic and acidic residues: residues 942-952, 960-970, 979-1013, and 1037-1052; these read DRGDRAPRDTG, RAPR…ERRA, and GSER…DDKN.

The protein belongs to the eIF-3 subunit A family. As to quaternary structure, component of the eukaryotic translation initiation factor 3 (eIF-3) complex.

The protein localises to the cytoplasm. Its function is as follows. RNA-binding component of the eukaryotic translation initiation factor 3 (eIF-3) complex, which is involved in protein synthesis of a specialized repertoire of mRNAs and, together with other initiation factors, stimulates binding of mRNA and methionyl-tRNAi to the 40S ribosome. The eIF-3 complex specifically targets and initiates translation of a subset of mRNAs involved in cell proliferation. This is Eukaryotic translation initiation factor 3 subunit A from Monosiga brevicollis (Choanoflagellate).